The following is a 408-amino-acid chain: Acetate kinase (408 aa).

Mg(2+) is bound at residue asparagine 7. Lysine 14 serves as a coordination point for ATP. A substrate-binding site is contributed by arginine 91. Aspartate 148 acts as the Proton donor/acceptor in catalysis. ATP is bound by residues 208–212, 283–285, and 331–335; these read HLGNG, DFR, and GIGEN. Glutamate 384 provides a ligand contact to Mg(2+).

This sequence belongs to the acetokinase family. As to quaternary structure, homodimer. It depends on Mg(2+) as a cofactor. Mn(2+) is required as a cofactor.

The protein localises to the cytoplasm. It carries out the reaction acetate + ATP = acetyl phosphate + ADP. It participates in metabolic intermediate biosynthesis; acetyl-CoA biosynthesis; acetyl-CoA from acetate: step 1/2. Its activity is regulated as follows. Inhibited by diethylpyrocarbonate, hydroxylamine and phenylglyoxal. In terms of biological role, catalyzes the formation of acetyl phosphate from acetate and ATP. Can also catalyze the reverse reaction. Can also phosphorylate propionate, but has very low activity toward butyrate. This Methanosarcina thermophila protein is Acetate kinase.